Reading from the N-terminus, the 678-residue chain is Secretin ExeD (678 aa).

Residues 1–25 form the signal peptide; it reads MINKGKSWRLATVAAALMMAGSAWA. Residues 26 to 122 form an N0 region; sequence TEYSASFKNA…VVDETNPGIG (97 aa). The tract at residues 124-188 is N1; sequence EMVTRVVPVR…EVVRRVDKAG (65 aa). The N2 stretch occupies residues 189–264; that stretch reads DQEVDIIKLR…MVRQLDRDLQ (76 aa). The interval 267-347 is N3; the sequence is GNTRVFYLKY…ELEQVVAKLD (81 aa). Positions 352 to 602 are secretin; the sequence is QVLVEAIIVE…VFIRPTILRD (251 aa). A s domain region spans residues 604–678; it reads HVYSGISSNK…GAQPFVQGNK (75 aa).

Belongs to the bacterial secretin family. GSP D subfamily. In terms of assembly, forms a cylindrical channel with 15 subunits.

It localises to the cell outer membrane. Involved in a type II secretion system (T2SS, formerly general secretion pathway, GSP) for the export of proteins. This subunit forms the outer membrane channel. The chain is Secretin ExeD (exeD) from Aeromonas salmonicida.